An 89-amino-acid polypeptide reads, in one-letter code: Large ribosomal subunit protein bL27 (89 aa).

A disordered region spans residues 1-20; the sequence is MAHKKAGGSSRNGRDSAGQR.

Belongs to the bacterial ribosomal protein bL27 family.

The polypeptide is Large ribosomal subunit protein bL27 (Paramagnetospirillum magneticum (strain ATCC 700264 / AMB-1) (Magnetospirillum magneticum)).